A 298-amino-acid polypeptide reads, in one-letter code: NADH-cytochrome b5 reductase 1 (298 aa).

A helical transmembrane segment spans residues 14 to 34; it reads VILAGAYLIDPSALPFVAAGV. Positions 56–159 constitute an FAD-binding FR-type domain; that stretch reads KEYRKFKLVD…RGPKGQFSYT (104 aa). FAD is bound by residues 139-154 and 165-197; these read SELS…GPKG and AIGM…QVNF.

Belongs to the flavoprotein pyridine nucleotide cytochrome reductase family. In terms of assembly, monomer. Component of the 2-(3-amino-3-carboxypropyl)histidine synthase complex composed of DPH1, DPH2, DPH3 and a NADH-dependent reductase, predominantly CBR1. FAD is required as a cofactor.

It is found in the mitochondrion outer membrane. It carries out the reaction 2 Fe(III)-[cytochrome b5] + NADH = 2 Fe(II)-[cytochrome b5] + NAD(+) + H(+). It catalyses the reaction 2 Fe(3+)-[Dph3] + NADH = 2 Fe(2+)-[Dph3] + NAD(+) + H(+). It functions in the pathway protein modification; peptidyl-diphthamide biosynthesis. Its function is as follows. NADH-dependent reductase for DPH3 and cytochrome b5. Required for the first step of diphthamide biosynthesis, a post-translational modification of histidine which occurs in elongation factor 2. DPH1 and DPH2 transfer a 3-amino-3-carboxypropyl (ACP) group from S-adenosyl-L-methionine (SAM) to a histidine residue, the reaction is assisted by a reduction system comprising DPH3 and a NADH-dependent reductase, predominantly CBR1. By reducing DPH3, also involved in the formation of the tRNA wobble base modification mcm5s 2U (5-methoxycarbonylmethyl-2-thiouridine), mediated by the elongator complex. The cytochrome b5/NADH cytochrome b5 reductase electron transfer system supports the catalytic activity of several sterol biosynthetic enzymes. The chain is NADH-cytochrome b5 reductase 1 (CBR1) from Mortierella alpina (Oleaginous fungus).